A 146-amino-acid polypeptide reads, in one-letter code: Putative inactive cytochrome P450 2G1 (146 aa).

Cysteine 91 contributes to the heme binding site.

This sequence belongs to the cytochrome P450 family. Heme is required as a cofactor.

This Homo sapiens (Human) protein is Putative inactive cytochrome P450 2G1 (CYP2G1P).